The chain runs to 304 residues: Elongation factor Ts (304 aa).

An involved in Mg(2+) ion dislocation from EF-Tu region spans residues 80-83 (TDFV).

It belongs to the EF-Ts family.

It is found in the cytoplasm. Functionally, associates with the EF-Tu.GDP complex and induces the exchange of GDP to GTP. It remains bound to the aminoacyl-tRNA.EF-Tu.GTP complex up to the GTP hydrolysis stage on the ribosome. The sequence is that of Elongation factor Ts from Clostridium tetani (strain Massachusetts / E88).